Here is a 151-residue protein sequence, read N- to C-terminus: Calcium-binding protein SPEC 2C (151 aa).

EF-hand domains follow at residues 10 to 45 (EQRKVFKSSFKSIDADGDGKITPEELKAAFKSIEIE), 46 to 78 (LTQEKIDEMMSMVDKDGSRPVDFSEILMKKAEQ), 81 to 116 (GKGAQYFKAFDALDTDKSGSLSPEELRTALSACTDP), and 118 to 151 (MTKEEIDAIIKKADGNNDGEIRRAEFVRMIQSSY). 18 residues coordinate Ca(2+): Asp-23, Asp-25, Asp-27, Lys-29, Glu-34, Asp-59, Asp-61, Ser-63, Glu-70, Asp-94, Asp-96, Ser-98, Ser-100, Glu-105, Asp-131, Asp-135, Glu-137, and Glu-142.

Found in cell lineages giving rise to the aboral ectoderm, a squamous epithelium covering the surface of the late stage embryo and larva.

In terms of biological role, calcium-binding protein involved in larval development and metamorphosis. Likely to function as calcium buffers mediating the transport of calcium from the sea water to the blastocoel where calcium is required for skeleton formation. This chain is Calcium-binding protein SPEC 2C (SPEC2C), found in Strongylocentrotus purpuratus (Purple sea urchin).